Reading from the N-terminus, the 540-residue chain is 2,3-bisphosphoglycerate-independent phosphoglycerate mutase (540 aa).

Positions 13 and 63 each coordinate Mn(2+). Serine 63 serves as the catalytic Phosphoserine intermediate. Substrate is bound by residues histidine 124, 154–155 (RD), arginine 186, arginine 192, 262–265 (RPDR), and lysine 356. Mn(2+)-binding residues include aspartate 423, histidine 427, aspartate 464, histidine 465, and histidine 483.

This sequence belongs to the BPG-independent phosphoglycerate mutase family. In terms of assembly, monomer. The cofactor is Mn(2+).

The catalysed reaction is (2R)-2-phosphoglycerate = (2R)-3-phosphoglycerate. The protein operates within carbohydrate degradation; glycolysis; pyruvate from D-glyceraldehyde 3-phosphate: step 3/5. Functionally, catalyzes the interconversion of 2-phosphoglycerate and 3-phosphoglycerate. The sequence is that of 2,3-bisphosphoglycerate-independent phosphoglycerate mutase from Chloroflexus aggregans (strain MD-66 / DSM 9485).